A 278-amino-acid polypeptide reads, in one-letter code: Bicarbonate transport system permease protein CmpB (278 aa).

A run of 7 helical transmembrane segments spans residues 24-44 (LDGI…WQIF), 93-113 (VAQG…LVGL), 124-144 (LFQF…LVAF), 151-171 (AIFV…AEGV), 196-216 (VVLP…IGLS), 217-237 (WLAI…GFFI), and 249-269 (IILA…FVAW). The 182-residue stretch at 86–267 (TIASLTRVAQ…AVGLLLDRFV (182 aa)) folds into the ABC transmembrane type-1 domain.

The protein belongs to the binding-protein-dependent transport system permease family. The complex is composed of two ATP-binding proteins (CmpC and CmpD), a transmembrane protein (CmpB) and a solute-binding protein (CmpA).

Its subcellular location is the cell inner membrane. Its function is as follows. Part of the ABC transporter complex CmpABCD involved in bicarbonate transport. Probably responsible for the translocation of the substrate across the membrane. The sequence is that of Bicarbonate transport system permease protein CmpB (cmpB) from Synechococcus sp. (strain ATCC 27144 / PCC 6301 / SAUG 1402/1) (Anacystis nidulans).